The sequence spans 172 residues: Mitochondrial import inner membrane translocase subunit Tim17-B (172 aa).

Cys9 and Cys78 are joined by a disulfide. 3 consecutive transmembrane segments (helical) span residues Cys17 to Phe37, Gln61 to Asp77, and Val113 to Leu133. The tract at residues Phe147–His172 is disordered.

The protein belongs to the Tim17/Tim22/Tim23 family. Component of the TIM23 complex at least composed of TIMM23, TIMM17 (TIMM17A or TIMM17B) and TIMM50. The complex interacts with the TIMM44 component of the PAM complex. The complex also interacts with DNAJC15.

The protein resides in the mitochondrion inner membrane. Functionally, essential component of the TIM23 complex, a complex that mediates the translocation of transit peptide-containing proteins across the mitochondrial inner membrane. The chain is Mitochondrial import inner membrane translocase subunit Tim17-B (Timm17b) from Mus musculus (Mouse).